A 106-amino-acid polypeptide reads, in one-letter code: Thioredoxin (106 aa).

Lys-3 is modified (N6-acetyllysine). The Thioredoxin domain maps to 3–106; sequence KQIESKTAFQ…KLEATINELV (104 aa). At Lys-8 the chain carries N6-succinyllysine. Catalysis depends on nucleophile residues Cys-32 and Cys-35. Cys-32 and Cys-35 are joined by a disulfide. Position 39 is an N6-acetyllysine (Lys-39). S-nitrosocysteine is present on residues Cys-62 and Cys-69. Cys-73 is subject to S-nitrosocysteine; alternate. An N6-acetyllysine; alternate modification is found at Lys-95. The residue at position 95 (Lys-95) is an N6-succinyllysine; alternate.

This sequence belongs to the thioredoxin family. Homodimer; disulfide-linked. Interacts with TXNIP through the redox-active site. Interacts with MAP3K5 and CASP3. Interacts with APEX1; the interaction stimulates the FOS/JUN AP-1 DNA-binding activity in a redox-dependent manner. Post-translationally, in the fully reduced protein, both Cys-69 and Cys-73 are nitrosylated in response to nitric oxide (NO). When two disulfide bonds are present in the protein, only Cys-73 is nitrosylated. Cys-73 can serve as donor for nitrosylation of target proteins.

The protein resides in the nucleus. It localises to the cytoplasm. It is found in the secreted. Participates in various redox reactions through the reversible oxidation of its active center dithiol to a disulfide and catalyzes dithiol-disulfide exchange reactions. Plays a role in the reversible S-nitrosylation of cysteine residues in target proteins, and thereby contributes to the response to intracellular nitric oxide. Nitrosylates the active site Cys of CASP3 in response to nitric oxide (NO), and thereby inhibits caspase-3 activity. Induces the FOS/JUN AP-1 DNA binding activity in ionizing radiation (IR) cells through its oxidation/reduction status and stimulates AP-1 transcriptional activity. In Pongo abelii (Sumatran orangutan), this protein is Thioredoxin (TXN).